The chain runs to 361 residues: METGAAELYDQALLGILQHVGNVQDFLRVLFGFLYRKTDFYRLLRHPSDRMGFPPGAAQALVLQVFKTFDHMARQDDEKRRQELEEKIRRKEEEEAKTVSAAAAEKEPVPVPVQEIEIDSTTELDGHQEVEKVQPPGPVKEMAHGSQEAEAPGAVAGAAEVPREPPILPRIQEQFQKNPDSYNGAVRENYTWSQDYTDLEVRVPVPKHVVKGKQVSVALSSSSIRVAMLEENGERVLMEGKLTHKINTESSLWSLEPGKCVLVNLSKVGEYWWNAILEGEEPIDIDKINKERSMATVDEEEQAVLDRLTFDYHQKLQGKPQSHELKVHEMLKKGWDAEGSPFRGQRFDPAMFNISPGAVQF.

Positions 87-97 (KIRRKEEEEAK) are enriched in basic and acidic residues. Disordered regions lie at residues 87–106 (KIRRKEEEEAKTVSAAAAEK) and 124–158 (LDGHQEVEKVQPPGPVKEMAHGSQEAEAPGAVAGA). Ser146 carries the phosphoserine modification. Over residues 148–158 (EAEAPGAVAGA) the composition is skewed to low complexity. In terms of domain architecture, CS spans 185–277 (AVRENYTWSQ…VGEYWWNAIL (93 aa)). A phosphoserine mark is found at Ser340 and Ser355.

This is NudC domain-containing protein 3 (NUDCD3) from Homo sapiens (Human).